Reading from the N-terminus, the 71-residue chain is UPF0346 protein SPP_0954 (71 aa).

Belongs to the UPF0346 family.

This chain is UPF0346 protein SPP_0954, found in Streptococcus pneumoniae (strain P1031).